Reading from the N-terminus, the 82-residue chain is Small ribosomal subunit protein uS17 (82 aa).

The protein belongs to the universal ribosomal protein uS17 family. As to quaternary structure, part of the 30S ribosomal subunit.

One of the primary rRNA binding proteins, it binds specifically to the 5'-end of 16S ribosomal RNA. This chain is Small ribosomal subunit protein uS17, found in Bradyrhizobium sp. (strain BTAi1 / ATCC BAA-1182).